Consider the following 1450-residue polypeptide: ABC transporter G family member 37 (1450 aa).

In terms of domain architecture, ABC transporter 1 spans 175-447 (VKLTGAKTHE…FEDCGFRCPE (273 aa)). Residue 207–214 (GPPSCGKT) coordinates ATP. In terms of domain architecture, ABC transmembrane type-2 1 spans 525–737 (ELFIACISRE…GEIGLSVNEF (213 aa)). The next 6 membrane-spanning stretches (helical) occupy residues 544–564 (VYIF…TVFI), 581–601 (ALFF…SMTA), 615–635 (FYPA…LSFF), 661–681 (FILL…LAAI), 687–707 (ASIT…GFVI), and 773–793 (LCAL…ALTF). The segment at 810 to 838 (SELQGTEKSTEDSSVRKKTTDSPVKTEEE) is disordered. The span at 817–838 (KSTEDSSVRKKTTDSPVKTEEE) shows a compositional bias: basic and acidic residues. Residues 850–1103 (VTFQDLNYFV…IIEYFESVPE (254 aa)) form the ABC transporter 2 domain. 895-902 (GVSGAGKT) serves as a coordination point for ATP. The ABC transmembrane type-2 2 domain occupies 1175–1389 (GQFKSILWKM…TLNGFISSQY (215 aa)). Transmembrane regions (helical) follow at residues 1194–1214 (YNLM…ALFW), 1226–1246 (MFTV…NNCA), 1282–1302 (IPYI…MIGF), 1313–1333 (LYSM…LVSI), 1339–1359 (VAAI…GFLI), 1365–1385 (PGWW…NGFI), and 1422–1442 (VTAV…AFFV).

Belongs to the ABC transporter superfamily. ABCG family. PDR (TC 3.A.1.205) subfamily. Expressed in roots and, to a lower extent, in seedlings.

The protein localises to the cell membrane. In terms of biological role, together with ABCG36, regulates auxin homeostasis and responses by playing a dual role in coumarin (and derivatives) and in the auxin precursor indole 3-butyric acid (IBA) efflux transport, thus influencing roots and root hairs development. Mediates coumarin exudation in the rhizosphere, especially in iron (Fe) deficient conditions, with a strong specificity for highly oxygenated compounds such as scopoletin and derivatives, dihydroxyscopoletin, esculetin, fraxin, fraxetin and esculin; these molecules improve plant Fe nutrition. Involved in the cellular detoxification of xenobiotics by promoting the excretion of some auxinic herbicides including 2,4-dichlorophenoxyacetic acid (2,4-D), 4-(2,4-dichlorophenoxy)butyric acid (2,4-DB) and other members of the phenoxyalkanoic acid family as well as the polar auxin transport inhibitor, napthylphthalamic acid (NPA). May be a general defense protein. The polypeptide is ABC transporter G family member 37 (Arabidopsis thaliana (Mouse-ear cress)).